Here is a 215-residue protein sequence, read N- to C-terminus: Ras-related protein Rab-14 (215 aa).

Ala2 bears the N-acetylalanine mark. Positions 21, 22, 23, 24, 25, 26, 38, 39, 40, 42, and 43 each coordinate GTP. Position 25 (Ser25) interacts with Mg(2+). A Switch 1 motif is present at residues 42-47; that stretch reads HTIGVE. Mg(2+)-binding residues include Thr43 and Asp66. Residues 68–77 carry the Switch 2 motif; that stretch reads AGQERFRAVT. Positions 69, 124, 125, 127, 155, and 156 each coordinate GTP. The interval 188-215 is disordered; the sequence is SGVQHKPSAPQGGRLTSEPQPQREGCGC. S-geranylgeranyl cysteine attachment occurs at residues Cys213 and Cys215. A Cysteine methyl ester modification is found at Cys215.

It belongs to the small GTPase superfamily. Rab family. Mg(2+) is required as a cofactor.

The protein localises to the recycling endosome. The protein resides in the early endosome membrane. It is found in the golgi apparatus membrane. It localises to the golgi apparatus. Its subcellular location is the trans-Golgi network membrane. The protein localises to the cytoplasmic vesicle. The protein resides in the phagosome. The catalysed reaction is GTP + H2O = GDP + phosphate + H(+). Regulated by guanine nucleotide exchange factors (GEFs) including DENND6A and DENND6B which promote the exchange of bound GDP for free GTP. Regulated by GTPase activating proteins (GAPs) which increase the GTP hydrolysis activity. Inhibited by GDP dissociation inhibitors (GDIs) which prevent Rab-GDP dissociation. The small GTPases Rab are key regulators of intracellular membrane trafficking, from the formation of transport vesicles to their fusion with membranes. Rabs cycle between an inactive GDP-bound form and an active GTP-bound form that is able to recruit to membranes different set of downstream effectors directly responsible for vesicle formation, movement, tethering and fusion. Involved in membrane trafficking between the Golgi complex and endosomes during early embryonic development. Regulates the Golgi to endosome transport of FGFR-containing vesicles during early development, a key process for developing basement membrane and epiblast and primitive endoderm lineages during early postimplantation development. May act by modulating the kinesin KIF16B-cargo association to endosomes. Regulates, together with its guanine nucleotide exchange factor DENND6A, the specific endocytic transport of ADAM10, N-cadherin/CDH2 shedding and cell-cell adhesion. Mediates endosomal tethering and fusion through the interaction with RUFY1 and RAB4B. Interaction with RAB11FIP1 may function in the process of neurite formation. In Gallus gallus (Chicken), this protein is Ras-related protein Rab-14 (RAB14).